The chain runs to 444 residues: Ubiquitin carboxyl-terminal hydrolase MINDY-3 (444 aa).

Cys-51 (nucleophile) is an active-site residue. Position 124 is a phosphoserine (Ser-124). Residue His-286 is the Proton acceptor of the active site.

The protein belongs to the MINDY deubiquitinase family. FAM188 subfamily. As to quaternary structure, interacts with COPS5.

The protein localises to the nucleus. It carries out the reaction Thiol-dependent hydrolysis of ester, thioester, amide, peptide and isopeptide bonds formed by the C-terminal Gly of ubiquitin (a 76-residue protein attached to proteins as an intracellular targeting signal).. Its function is as follows. Hydrolase that can remove 'Lys-48'-linked conjugated ubiquitin from proteins. The polypeptide is Ubiquitin carboxyl-terminal hydrolase MINDY-3 (Mus musculus (Mouse)).